Consider the following 347-residue polypeptide: Globoside alpha-1,3-N-acetylgalactosaminyltransferase 1 (347 aa).

Over 1-5 the chain is Cytoplasmic; it reads MRCRR. A helical; Signal-anchor for type II membrane protein membrane pass occupies residues 6-26; the sequence is LALGLGFSLLSGIALWSLWIY. Residues 27 to 347 are Lumenal-facing; it reads METWLPFSYV…LDKATSWLRS (321 aa). Asparagine 108 carries an N-linked (GlcNAc...) asparagine glycan. Substrate-binding positions include 116–121, 206–208, and 228–231; these read FAVGKY, DVD, and HPGY. The Mn(2+) site is built by aspartate 206 and aspartate 208. The active-site Nucleophile is the glutamate 298.

This sequence belongs to the glycosyltransferase 6 family. The cofactor is Mn(2+).

It is found in the golgi apparatus membrane. The catalysed reaction is a globoside Gb4Cer (d18:1(4E)) + UDP-N-acetyl-alpha-D-galactosamine = a globoside Forssman (d18:1(4E)) + UDP + H(+). It carries out the reaction a globoside Gb4Cer + UDP-N-acetyl-alpha-D-galactosamine = a globoside IV3GalNAc-Gb4Cer + UDP + H(+). It functions in the pathway protein modification; protein glycosylation. Catalyzes the formation of Forssman glycolipid via the addition of N-acetylgalactosamine (GalNAc) in alpha-1,3-linkage to GalNAcb-1,3Gala-1,4Galb-1,4GlcCer (Gb4Cer). Forssman glycolipid (also called Forssman antigen; FG) probably serves for adherence of some pathogens such as E.coli uropathogenic strains. This chain is Globoside alpha-1,3-N-acetylgalactosaminyltransferase 1, found in Canis lupus familiaris (Dog).